Here is a 161-residue protein sequence, read N- to C-terminus: Crossover junction endodeoxyribonuclease RuvC (161 aa).

Active-site residues include aspartate 7, glutamate 67, and aspartate 140. 3 residues coordinate Mg(2+): aspartate 7, glutamate 67, and aspartate 140.

This sequence belongs to the RuvC family. In terms of assembly, homodimer which binds Holliday junction (HJ) DNA. The HJ becomes 2-fold symmetrical on binding to RuvC with unstacked arms; it has a different conformation from HJ DNA in complex with RuvA. In the full resolvosome a probable DNA-RuvA(4)-RuvB(12)-RuvC(2) complex forms which resolves the HJ. Mg(2+) serves as cofactor.

Its subcellular location is the cytoplasm. The catalysed reaction is Endonucleolytic cleavage at a junction such as a reciprocal single-stranded crossover between two homologous DNA duplexes (Holliday junction).. The RuvA-RuvB-RuvC complex processes Holliday junction (HJ) DNA during genetic recombination and DNA repair. Endonuclease that resolves HJ intermediates. Cleaves cruciform DNA by making single-stranded nicks across the HJ at symmetrical positions within the homologous arms, yielding a 5'-phosphate and a 3'-hydroxyl group; requires a central core of homology in the junction. The consensus cleavage sequence is 5'-(A/T)TT(C/G)-3'. Cleavage occurs on the 3'-side of the TT dinucleotide at the point of strand exchange. HJ branch migration catalyzed by RuvA-RuvB allows RuvC to scan DNA until it finds its consensus sequence, where it cleaves and resolves the cruciform DNA. The polypeptide is Crossover junction endodeoxyribonuclease RuvC (Natranaerobius thermophilus (strain ATCC BAA-1301 / DSM 18059 / JW/NM-WN-LF)).